We begin with the raw amino-acid sequence, 211 residues long: Small ribosomal subunit protein uS3 (211 aa).

Residues 16-85 (IDEYFKGKLV…NPQIEVKPLE (70 aa)) form the KH type-2 domain.

It belongs to the universal ribosomal protein uS3 family. In terms of assembly, part of the 30S ribosomal subunit.

Its function is as follows. Binds the lower part of the 30S subunit head. In Methanococcus vannielii (strain ATCC 35089 / DSM 1224 / JCM 13029 / OCM 148 / SB), this protein is Small ribosomal subunit protein uS3.